The sequence spans 1026 residues: Multidrug resistance protein MdtC (1026 aa).

Helical transmembrane passes span 15–35 (ILIA…LPVA), 333–353 (EVEE…FLFL), 360–380 (LIPA…MYLC), 387–407 (LSLM…IVVL), 431–451 (VGFT…PLLL), 463–483 (FAVT…TLTP), 528–548 (LVGV…IAIP), 853–873 (LILI…LYES), 897–917 (LFNA…IGIV), 953–973 (PIMM…LSGG), and 984–1004 (ITIV…TPVV).

This sequence belongs to the resistance-nodulation-cell division (RND) (TC 2.A.6) family. MdtC subfamily. Part of a tripartite efflux system composed of MdtA, MdtB and MdtC. MdtC forms a heteromultimer with MdtB.

It is found in the cell inner membrane. The protein is Multidrug resistance protein MdtC of Salmonella newport (strain SL254).